We begin with the raw amino-acid sequence, 318 residues long: Methionine import ATP-binding protein MetN (318 aa).

The region spanning 2 to 237 is the ABC transporter domain; that stretch reads IEIKDVGKIF…PEGELKKIIE (236 aa). Position 34-41 (34-41) interacts with ATP; that stretch reads GRSGAGKS.

The protein belongs to the ABC transporter superfamily. Methionine importer (TC 3.A.1.24) family. The complex is composed of two ATP-binding proteins (MetN), two transmembrane proteins (MetI) and a solute-binding protein (MetQ).

It localises to the cell membrane. It catalyses the reaction L-methionine(out) + ATP + H2O = L-methionine(in) + ADP + phosphate + H(+). The catalysed reaction is D-methionine(out) + ATP + H2O = D-methionine(in) + ADP + phosphate + H(+). Functionally, part of the ABC transporter complex MetNIQ involved in methionine import. Responsible for energy coupling to the transport system. The polypeptide is Methionine import ATP-binding protein MetN (Clostridium tetani (strain Massachusetts / E88)).